A 212-amino-acid chain; its full sequence is Large ribosomal subunit protein uL3 (212 aa).

The interval 136-155 is disordered; sequence THGNSLSHRSNGSIGQNQTP. The residue at position 153 (Gln153) is an N5-methylglutamine.

Belongs to the universal ribosomal protein uL3 family. In terms of assembly, part of the 50S ribosomal subunit. Forms a cluster with proteins L14 and L19. Post-translationally, methylated by PrmB.

One of the primary rRNA binding proteins, it binds directly near the 3'-end of the 23S rRNA, where it nucleates assembly of the 50S subunit. The protein is Large ribosomal subunit protein uL3 of Shewanella baltica (strain OS223).